The sequence spans 296 residues: 4-hydroxy-tetrahydrodipicolinate synthase (296 aa).

Residue T49 coordinates pyruvate. Y137 serves as the catalytic Proton donor/acceptor. The Schiff-base intermediate with substrate role is filled by K166. Residue V208 coordinates pyruvate.

It belongs to the DapA family. Homotetramer; dimer of dimers.

Its subcellular location is the cytoplasm. The enzyme catalyses L-aspartate 4-semialdehyde + pyruvate = (2S,4S)-4-hydroxy-2,3,4,5-tetrahydrodipicolinate + H2O + H(+). The protein operates within amino-acid biosynthesis; L-lysine biosynthesis via DAP pathway; (S)-tetrahydrodipicolinate from L-aspartate: step 3/4. Its function is as follows. Catalyzes the condensation of (S)-aspartate-beta-semialdehyde [(S)-ASA] and pyruvate to 4-hydroxy-tetrahydrodipicolinate (HTPA). The sequence is that of 4-hydroxy-tetrahydrodipicolinate synthase from Desulforamulus reducens (strain ATCC BAA-1160 / DSM 100696 / MI-1) (Desulfotomaculum reducens).